The following is a 49-amino-acid chain: Large ribosomal subunit protein bL33B (49 aa).

Belongs to the bacterial ribosomal protein bL33 family.

This chain is Large ribosomal subunit protein bL33B, found in Shouchella clausii (strain KSM-K16) (Alkalihalobacillus clausii).